The following is a 131-amino-acid chain: Ribonuclease P protein component (131 aa).

The protein belongs to the RnpA family. In terms of assembly, consists of a catalytic RNA component (M1 or rnpB) and a protein subunit.

The catalysed reaction is Endonucleolytic cleavage of RNA, removing 5'-extranucleotides from tRNA precursor.. In terms of biological role, RNaseP catalyzes the removal of the 5'-leader sequence from pre-tRNA to produce the mature 5'-terminus. It can also cleave other RNA substrates such as 4.5S RNA. The protein component plays an auxiliary but essential role in vivo by binding to the 5'-leader sequence and broadening the substrate specificity of the ribozyme. In Stutzerimonas stutzeri (strain A1501) (Pseudomonas stutzeri), this protein is Ribonuclease P protein component.